The primary structure comprises 320 residues: Cytochrome f (320 aa).

The first 35 residues, 1 to 35, serve as a signal peptide directing secretion; the sequence is MENRNTFSWVKEQITRSISVSIMIYVITRTSISNA. Tyrosine 36, cysteine 56, cysteine 59, and histidine 60 together coordinate heme. Residues 286–305 form a helical membrane-spanning segment; the sequence is VQGLLFFFASVILAQVFLVL.

Belongs to the cytochrome f family. The 4 large subunits of the cytochrome b6-f complex are cytochrome b6, subunit IV (17 kDa polypeptide, petD), cytochrome f and the Rieske protein, while the 4 small subunits are PetG, PetL, PetM and PetN. The complex functions as a dimer. The cofactor is heme.

Its subcellular location is the plastid. The protein resides in the chloroplast thylakoid membrane. In terms of biological role, component of the cytochrome b6-f complex, which mediates electron transfer between photosystem II (PSII) and photosystem I (PSI), cyclic electron flow around PSI, and state transitions. In Triticum aestivum (Wheat), this protein is Cytochrome f (petA).